The following is a 213-amino-acid chain: Insulin-like peptide INSL6 (213 aa).

Residues 1–20 (MPRLLRLSLLWLGLLLVRFS) form the signal peptide. Cystine bridges form between Cys33-Cys179, Cys45-Cys192, and Cys178-Cys183. A propeptide spans 55–168 (FEEETPFSRL…SNLFWGHHPQ (114 aa)) (connecting peptide). Positions 201 to 213 (LKEKRSSLVTKIY) are excised as a propeptide.

Belongs to the insulin family. As to expression, testis specific.

The protein localises to the secreted. In terms of biological role, may have a role in sperm development and fertilization. The chain is Insulin-like peptide INSL6 (INSL6) from Homo sapiens (Human).